Reading from the N-terminus, the 427-residue chain is MGSVRTNRYSIVSSEEDGMKLATMAVANGFGNGKSKVHTRQQCRSRFVKKDGHCNVQFINVGEKGQRYLADIFTTCVDIRWRWMLVIFCLAFVLSWLFFGCVFWLIALLHGDLDASKESKACVSEVNSFTAAFLFSIETQTTIGYGFRCVTDECPIAVFMVVFQSIVGCIIDAFIIGAVMAKMAKPKKRNETLVFSHNAVIAMRDGKLCLMWRVGNLRKSHLVEAHVRAQLLKSRITSEGEYIPLDQIDINVGFDSGIDRIFLVSPITIVHEIDEDSPLYDLSKQDIDNADFEIVVILEGMVEATAMTTQCRSSYLANEILWGHRYEPVLFEEKHCYKVDYSRFHKTYEVPNTPLCSARDLAEKKYILSNANSFCYENEVALTSKEEEDSENGVPESTSTDSPPGIDLHNQASVPLEPRPLRRESEI.

Residues 1–81 are Cytoplasmic-facing; the sequence is MGSVRTNRYS…IFTTCVDIRW (81 aa). Cys76 bears the S-nitrosocysteine mark. Residues 82–106 traverse the membrane as a helical segment; the sequence is RWMLVIFCLAFVLSWLFFGCVFWLI. The Extracellular segment spans residues 107–128; it reads ALLHGDLDASKESKACVSEVNS. Positions 129–140 form an intramembrane region, helical; Pore-forming; sequence FTAAFLFSIETQ. Residues 141 to 147 constitute an intramembrane region (pore-forming); the sequence is TTIGYGF. A Selectivity filter motif is present at residues 142–147; that stretch reads TIGYGF. The Extracellular portion of the chain corresponds to 148–156; that stretch reads RCVTDECPI. The helical transmembrane segment at 157–178 threads the bilayer; the sequence is AVFMVVFQSIVGCIIDAFIIGA. The Cytoplasmic portion of the chain corresponds to 179 to 427; it reads VMAKMAKPKK…PRPLRRESEI (249 aa). Residues 181-208 form a polyphosphoinositide (PIP2)-binding region; that stretch reads AKMAKPKKRNETLVFSHNAVIAMRDGKL. Positions 383–427 are disordered; it reads TSKEEEDSENGVPESTSTDSPPGIDLHNQASVPLEPRPLRRESEI. A PDZ-binding motif is present at residues 425 to 427; it reads SEI.

The protein belongs to the inward rectifier-type potassium channel (TC 1.A.2.1) family. KCNJ2 subfamily. In terms of assembly, homotetramer. Homomultimeric and heteromultimeric association with KCNJ4/Kir2.3. Can form heteromeric channels with Kir2.6/KCNJ18. Associates, via its PDZ-recognition domain, with a complex containing LIN7A, LIN7B, LIN7C, DLG1, CASK and APBA1. Post-translationally, S-nitrosylation increases the open probability and inward rectifying currents. As to expression, prominently expressed in the central nervous system. Also found in other excitable tissues such as heart and skeletal muscle.

The protein resides in the cell membrane. It is found in the sarcolemma. The protein localises to the T-tubule. It catalyses the reaction K(+)(in) = K(+)(out). Its activity is regulated as follows. Activated by phosphatidylinositol 4,5 biphosphate (PtdIns(4,5)P2). Functionally, inward rectifier potassium channels are characterized by a greater tendency to allow potassium to flow into the cell rather than out of it. Their voltage dependence is regulated by the concentration of extracellular potassium; as external potassium is raised, the voltage range of the channel opening shifts to more positive voltages. The inward rectification is mainly due to the blockage of outward current by internal magnesium. Can be blocked by extracellular barium and cesium. Probably participates in establishing action potential waveform and excitability of neuronal and muscle tissues. The chain is Inward rectifier potassium channel 2 (Kcnj2) from Rattus norvegicus (Rat).